The primary structure comprises 385 residues: Photoreceptor ankyrin repeat protein (385 aa).

5 ANK repeats span residues 17-46 (CNLK…SPEE), 53-83 (NGRT…DVNQ), 87-116 (DGNT…GLDL), 122-151 (RGLT…DLSS), and 156-190 (RGKT…QLSL). The interval 270–385 (LGTRGKSVPE…GGLGQAGGSK (116 aa)) is disordered. The segment covering 284–297 (APPPPPEPHPPQQV) has biased composition (pro residues). Residues 304–326 (APNQSPQSMFSQWLQSRDSTRSQ) show a composition bias toward polar residues. The span at 361-373 (FQERKKKEEETEP) shows a compositional bias: basic and acidic residues. Positions 374–385 (RGGGLGQAGGSK) are enriched in gly residues.

Isoform 1: Expressed predominantly in the retina. Isoform 2: Expressed in the pineal gland.

The protein resides in the cytoplasm. Its subcellular location is the cytosol. The protein localises to the nucleus. Its function is as follows. Acts as a transcriptional repressor for CRX-activated photoreceptor gene regulation. The polypeptide is Photoreceptor ankyrin repeat protein (Mus musculus (Mouse)).